The chain runs to 469 residues: ATP-dependent protease ATPase subunit HslU (469 aa).

Residues I24, 66–71, D282, E347, and R419 each bind ATP; that span reads GVGKTE.

The protein belongs to the ClpX chaperone family. HslU subfamily. A double ring-shaped homohexamer of HslV is capped on each side by a ring-shaped HslU homohexamer. The assembly of the HslU/HslV complex is dependent on binding of ATP.

It localises to the cytoplasm. In terms of biological role, ATPase subunit of a proteasome-like degradation complex; this subunit has chaperone activity. The binding of ATP and its subsequent hydrolysis by HslU are essential for unfolding of protein substrates subsequently hydrolyzed by HslV. HslU recognizes the N-terminal part of its protein substrates and unfolds these before they are guided to HslV for hydrolysis. This chain is ATP-dependent protease ATPase subunit HslU, found in Listeria monocytogenes serovar 1/2a (strain ATCC BAA-679 / EGD-e).